The primary structure comprises 490 residues: Colicin-10 (490 aa).

The segment covering 1–20 (MDKVTDNSPDVESTESTEGS) has biased composition (polar residues). Disordered regions lie at residues 1 to 29 (MDKV…VDTG) and 146 to 171 (QKAR…EIAR). A compositionally biased stretch (basic and acidic residues) spans 146 to 170 (QKAREEAEAAEKALREAERQRDEIA). Residues 447–467 (IVALMFSFIVGAPLGFWGIAI) form a helical membrane-spanning segment.

Belongs to the channel forming colicin family.

It is found in the host membrane. This colicin is a channel-forming colicin. This class of transmembrane toxins depolarize the cytoplasmic membrane, leading to dissipation of cellular energy. In terms of biological role, colicins are polypeptide toxins produced by and active against E.coli and closely related bacteria. This Escherichia coli protein is Colicin-10 (cta).